The sequence spans 460 residues: Phosphoglucomutase (460 aa).

Serine 103 (phosphoserine intermediate) is an active-site residue. A Mg(2+)-binding site is contributed by serine 103. Residues 103-104 (SH) and lysine 113 each bind substrate. Positions 239, 241, and 243 each coordinate Mg(2+). Residues 243 to 244 (DR), threonine 303, and 322 to 324 (EMS) each bind substrate.

It belongs to the phosphohexose mutase family. It depends on Mg(2+) as a cofactor.

It localises to the cytoplasm. The catalysed reaction is alpha-D-glucose 1-phosphate = alpha-D-glucose 6-phosphate. Its function is as follows. This enzyme participates in both the breakdown and synthesis of glucose. The polypeptide is Phosphoglucomutase (pgm) (Neisseria meningitidis serogroup A / serotype 4A (strain DSM 15465 / Z2491)).